The sequence spans 955 residues: 2-oxoglutarate dehydrogenase E1 component (955 aa).

This sequence belongs to the alpha-ketoglutarate dehydrogenase family. As to quaternary structure, homodimer. Part of the 2-oxoglutarate dehydrogenase (OGDH) complex composed of E1 (2-oxoglutarate dehydrogenase), E2 (dihydrolipoamide succinyltransferase) and E3 (dihydrolipoamide dehydrogenase); the complex contains multiple copies of the three enzymatic components (E1, E2 and E3). The cofactor is thiamine diphosphate.

It catalyses the reaction N(6)-[(R)-lipoyl]-L-lysyl-[protein] + 2-oxoglutarate + H(+) = N(6)-[(R)-S(8)-succinyldihydrolipoyl]-L-lysyl-[protein] + CO2. Functionally, E1 component of the 2-oxoglutarate dehydrogenase (OGDH) complex which catalyzes the decarboxylation of 2-oxoglutarate, the first step in the conversion of 2-oxoglutarate to succinyl-CoA and CO(2). The chain is 2-oxoglutarate dehydrogenase E1 component from Bacillus cereus (strain ATCC 10987 / NRS 248).